The sequence spans 195 residues: Glycerol-3-phosphate acyltransferase (195 aa).

Transmembrane regions (helical) follow at residues 4–24 (GLIL…GLLL), 53–73 (GLAA…VLIA), 80–100 (TAVW…WLGF), 110–130 (LGVL…IWLA), 133–153 (FLFR…PIAL), and 154–174 (YFLS…IVFI).

It belongs to the PlsY family. Probably interacts with PlsX.

It localises to the cell inner membrane. The enzyme catalyses an acyl phosphate + sn-glycerol 3-phosphate = a 1-acyl-sn-glycero-3-phosphate + phosphate. The protein operates within lipid metabolism; phospholipid metabolism. Its function is as follows. Catalyzes the transfer of an acyl group from acyl-phosphate (acyl-PO(4)) to glycerol-3-phosphate (G3P) to form lysophosphatidic acid (LPA). This enzyme utilizes acyl-phosphate as fatty acyl donor, but not acyl-CoA or acyl-ACP. The sequence is that of Glycerol-3-phosphate acyltransferase from Mesorhizobium japonicum (strain LMG 29417 / CECT 9101 / MAFF 303099) (Mesorhizobium loti (strain MAFF 303099)).